A 211-amino-acid chain; its full sequence is Large ribosomal subunit protein uL3 (211 aa).

Gln150 is modified (N5-methylglutamine).

Belongs to the universal ribosomal protein uL3 family. Part of the 50S ribosomal subunit. Forms a cluster with proteins L14 and L19. Post-translationally, methylated by PrmB.

One of the primary rRNA binding proteins, it binds directly near the 3'-end of the 23S rRNA, where it nucleates assembly of the 50S subunit. This chain is Large ribosomal subunit protein uL3, found in Pseudomonas syringae pv. syringae (strain B728a).